A 341-amino-acid chain; its full sequence is Casein kinase I isoform alpha (341 aa).

Positions 16–284 constitute a Protein kinase domain; that stretch reads YKLIRKIGSG…YLRQLFRILF (269 aa). ATP is bound by residues 22-30 and lysine 45; that span reads IGSGSFGDI. The active-site Proton acceptor is the aspartate 135. The span at 306-320 shows a compositional bias: polar residues; the sequence is QSQSSGVPGTNTTTQ. A disordered region spans residues 306-341; the sequence is QSQSSGVPGTNTTTQGATVPSAGVPAGVAPGGTTPQ. Over residues 321–341 the composition is skewed to low complexity; the sequence is GATVPSAGVPAGVAPGGTTPQ.

Belongs to the protein kinase superfamily. CK1 Ser/Thr protein kinase family. Casein kinase I subfamily.

It catalyses the reaction L-seryl-[protein] + ATP = O-phospho-L-seryl-[protein] + ADP + H(+). The catalysed reaction is L-threonyl-[protein] + ATP = O-phospho-L-threonyl-[protein] + ADP + H(+). This chain is Casein kinase I isoform alpha (kin-19), found in Caenorhabditis elegans.